Reading from the N-terminus, the 549-residue chain is Glucose-6-phosphate isomerase (549 aa).

Glutamate 355 functions as the Proton donor in the catalytic mechanism. Catalysis depends on residues histidine 386 and lysine 514.

The protein belongs to the GPI family.

The protein resides in the cytoplasm. It catalyses the reaction alpha-D-glucose 6-phosphate = beta-D-fructose 6-phosphate. It functions in the pathway carbohydrate biosynthesis; gluconeogenesis. Its pathway is carbohydrate degradation; glycolysis; D-glyceraldehyde 3-phosphate and glycerone phosphate from D-glucose: step 2/4. Functionally, catalyzes the reversible isomerization of glucose-6-phosphate to fructose-6-phosphate. This chain is Glucose-6-phosphate isomerase, found in Salmonella paratyphi A (strain AKU_12601).